A 429-amino-acid chain; its full sequence is MTVHVTGCSTATADQLVSREIRTESGQREVFCGLTGIVWLHRKIQDAFFLVVGSRTCAHLVQSAAGVMIFAEPRFGTAIMEEKDLAGLTDANDELDRVVTQLLARRPDIKLLFLVGSCPSEVIKLDLSRAAFRLSQRFSPGVRILNYSGSGIETTFTQGEDACLASLVPELPAQTDTKPSLLVVGSLADVVEDQFARMFEALGVGNVAFFPPRKSTALPSVGPNTKILMAQPFLPDTVRALEERGAKRLAAPFPLGVEGTTGWLRAAADAFGVDPAKFEQVTAPNRARAERALSAFKSELGGRRIFFFPDSQLEIPLARFLSRELDMQLVEVATPYLHREHLAEELKLLPIEVALTEGQDVDDQLDRCRIARPDIVVCGLGLANPLEAEGITTKWSIELVFTPIQGYEQAADLAELFARPLVRRAKLVA.

Residues Cys32, Cys57, and Cys118 each coordinate [4Fe-4S] cluster.

It belongs to the BchN/ChlN family. As to quaternary structure, protochlorophyllide reductase is composed of three subunits; BchL, BchN and BchB. Forms a heterotetramer of two BchB and two BchN subunits. Requires [4Fe-4S] cluster as cofactor.

The catalysed reaction is chlorophyllide a + oxidized 2[4Fe-4S]-[ferredoxin] + 2 ADP + 2 phosphate = protochlorophyllide a + reduced 2[4Fe-4S]-[ferredoxin] + 2 ATP + 2 H2O. The protein operates within porphyrin-containing compound metabolism; bacteriochlorophyll biosynthesis (light-independent). In terms of biological role, component of the dark-operative protochlorophyllide reductase (DPOR) that uses Mg-ATP and reduced ferredoxin to reduce ring D of protochlorophyllide (Pchlide) to form chlorophyllide a (Chlide). This reaction is light-independent. The NB-protein (BchN-BchB) is the catalytic component of the complex. This is Light-independent protochlorophyllide reductase subunit N from Rhodopseudomonas palustris (strain TIE-1).